A 31-amino-acid chain; its full sequence is Cytochrome b6-f complex subunit 6 (31 aa).

The helical transmembrane segment at 4–24 (ITSYFGFLLAALTITSALLIG) threads the bilayer.

Belongs to the PetL family. The 4 large subunits of the cytochrome b6-f complex are cytochrome b6, subunit IV (17 kDa polypeptide, PetD), cytochrome f and the Rieske protein, while the 4 small subunits are PetG, PetL, PetM and PetN. The complex functions as a dimer.

The protein resides in the plastid. It is found in the chloroplast thylakoid membrane. Component of the cytochrome b6-f complex, which mediates electron transfer between photosystem II (PSII) and photosystem I (PSI), cyclic electron flow around PSI, and state transitions. PetL is important for photoautotrophic growth as well as for electron transfer efficiency and stability of the cytochrome b6-f complex. The protein is Cytochrome b6-f complex subunit 6 of Magnolia grandiflora (Southern magnolia).